The chain runs to 105 residues: Ig lambda chain C region (105 aa).

One can recognise an Ig-like domain in the interval P2–T100. C27 and C86 are disulfide-bonded.

The protein is Ig lambda chain C region of Sus scrofa (Pig).